A 426-amino-acid chain; its full sequence is Enolase (426 aa).

Q165 contacts (2R)-2-phosphoglycerate. E209 serves as the catalytic Proton donor. The Mg(2+) site is built by D244, E287, and D313. The (2R)-2-phosphoglycerate site is built by K338, R367, S368, and K389. K338 functions as the Proton acceptor in the catalytic mechanism.

It belongs to the enolase family. It depends on Mg(2+) as a cofactor.

It localises to the cytoplasm. It is found in the secreted. The protein localises to the cell surface. It catalyses the reaction (2R)-2-phosphoglycerate = phosphoenolpyruvate + H2O. Its pathway is carbohydrate degradation; glycolysis; pyruvate from D-glyceraldehyde 3-phosphate: step 4/5. Its function is as follows. Catalyzes the reversible conversion of 2-phosphoglycerate (2-PG) into phosphoenolpyruvate (PEP). It is essential for the degradation of carbohydrates via glycolysis. The chain is Enolase from Methanococcus maripaludis (strain C7 / ATCC BAA-1331).